We begin with the raw amino-acid sequence, 341 residues long: Anthranilate phosphoribosyltransferase (341 aa).

5-phospho-alpha-D-ribose 1-diphosphate contacts are provided by residues glycine 83, 86-87, threonine 91, 93-96, 111-119, and serine 123; these read GD, NIST, and KHGNRGVSS. Glycine 83 provides a ligand contact to anthranilate. Serine 95 contacts Mg(2+). Position 114 (asparagine 114) interacts with anthranilate. Anthranilate is bound at residue arginine 169. Residues aspartate 228 and glutamate 229 each contribute to the Mg(2+) site.

It belongs to the anthranilate phosphoribosyltransferase family. Homodimer. Mg(2+) serves as cofactor.

The catalysed reaction is N-(5-phospho-beta-D-ribosyl)anthranilate + diphosphate = 5-phospho-alpha-D-ribose 1-diphosphate + anthranilate. The protein operates within amino-acid biosynthesis; L-tryptophan biosynthesis; L-tryptophan from chorismate: step 2/5. Functionally, catalyzes the transfer of the phosphoribosyl group of 5-phosphorylribose-1-pyrophosphate (PRPP) to anthranilate to yield N-(5'-phosphoribosyl)-anthranilate (PRA). The protein is Anthranilate phosphoribosyltransferase of Cupriavidus necator (strain ATCC 17699 / DSM 428 / KCTC 22496 / NCIMB 10442 / H16 / Stanier 337) (Ralstonia eutropha).